An 896-amino-acid polypeptide reads, in one-letter code: Translation initiation factor IF-2 (896 aa).

The tract at residues 49–310 (LKKEHGDTSG…MQQGFDKSAT (262 aa)) is disordered. Polar residues predominate over residues 57–66 (SGETEPTRLT). Basic and acidic residues-rich tracts occupy residues 101-174 (STIE…KDMN), 184-240 (AKKE…KSAD), and 250-263 (REAE…DEKA). A compositionally biased stretch (basic residues) spans 284–295 (RNQRGRGGKGKL). The region spanning 395 to 564 (GRAPVVTIMG…LLQSEVLELT (170 aa)) is the tr-type G domain. Positions 404 to 411 (GHVDHGKT) are G1. Residue 404-411 (GHVDHGKT) participates in GTP binding. A G2 region spans residues 429-433 (GITQH). The segment at 450–453 (DTPG) is G3. GTP-binding positions include 450–454 (DTPGH) and 504–507 (NKID). The segment at 504 to 507 (NKID) is G4. Positions 540-542 (SAK) are G5.

This sequence belongs to the TRAFAC class translation factor GTPase superfamily. Classic translation factor GTPase family. IF-2 subfamily.

It localises to the cytoplasm. One of the essential components for the initiation of protein synthesis. Protects formylmethionyl-tRNA from spontaneous hydrolysis and promotes its binding to the 30S ribosomal subunits. Also involved in the hydrolysis of GTP during the formation of the 70S ribosomal complex. This Vibrio atlanticus (strain LGP32) (Vibrio splendidus (strain Mel32)) protein is Translation initiation factor IF-2.